A 454-amino-acid chain; its full sequence is NADP-specific glutamate dehydrogenase 1 (454 aa).

Residue Lys-110 is part of the active site. 174 to 203 (GVLTGKGLNWGGSLIRPEATGYGLVYYTQA) provides a ligand contact to NAD(+).

Belongs to the Glu/Leu/Phe/Val dehydrogenases family. Homohexamer.

The enzyme catalyses L-glutamate + NADP(+) + H2O = 2-oxoglutarate + NH4(+) + NADPH + H(+). The protein is NADP-specific glutamate dehydrogenase 1 (GDH1) of Saccharomyces uvarum (strain ATCC 76518 / CBS 7001 / CLIB 283 / NBRC 10550 / MCYC 623 / NCYC 2669 / NRRL Y-11845) (Yeast).